The following is a 442-amino-acid chain: Chromosomal replication initiator protein DnaA (442 aa).

Residues 1 to 69 (METLWDGILS…AQAGEQVIGR (69 aa)) form a domain I, interacts with DnaA modulators region. A domain II region spans residues 69–103 (RPIQVDFIVSEQSEEALKPVIEREPAPAAPPANVA). The interval 104–320 (SLNSKYTFSR…GALIRAVAYV (217 aa)) is domain III, AAA+ region. Positions 148, 150, 151, and 152 each coordinate ATP. A domain IV, binds dsDNA region spans residues 321 to 442 (SISGLPMTVE…GNRLEADARH (122 aa)).

The protein belongs to the DnaA family. In terms of assembly, oligomerizes as a right-handed, spiral filament on DNA at oriC.

The protein resides in the cytoplasm. Functionally, plays an essential role in the initiation and regulation of chromosomal replication. ATP-DnaA binds to the origin of replication (oriC) to initiate formation of the DNA replication initiation complex once per cell cycle. Binds the DnaA box (a 9 base pair repeat at the origin) and separates the double-stranded (ds)DNA. Forms a right-handed helical filament on oriC DNA; dsDNA binds to the exterior of the filament while single-stranded (ss)DNA is stabiized in the filament's interior. The ATP-DnaA-oriC complex binds and stabilizes one strand of the AT-rich DNA unwinding element (DUE), permitting loading of DNA polymerase. After initiation quickly degrades to an ADP-DnaA complex that is not apt for DNA replication. Binds acidic phospholipids. The protein is Chromosomal replication initiator protein DnaA of Gloeobacter violaceus (strain ATCC 29082 / PCC 7421).